The sequence spans 591 residues: V-type ATP synthase alpha chain (591 aa).

Position 242-249 (242-249 (GPFGAGKT)) interacts with ATP.

This sequence belongs to the ATPase alpha/beta chains family.

The catalysed reaction is ATP + H2O + 4 H(+)(in) = ADP + phosphate + 5 H(+)(out). Produces ATP from ADP in the presence of a proton gradient across the membrane. The V-type alpha chain is a catalytic subunit. This is V-type ATP synthase alpha chain from Chlamydia trachomatis serovar A (strain ATCC VR-571B / DSM 19440 / HAR-13).